We begin with the raw amino-acid sequence, 126 residues long: Anti-adapter protein IraD (126 aa).

The protein belongs to the GpW/Gp25 family. IraD subfamily. Interacts with RssB.

The protein localises to the cytoplasm. Functionally, inhibits RpoS proteolysis by regulating RssB activity, thereby increasing the stability of the sigma stress factor RpoS during oxidative stress. Its effect on RpoS stability is due to its interaction with RssB, which probably blocks the interaction of RssB with RpoS, and the consequent delivery of the RssB-RpoS complex to the ClpXP protein degradation pathway. This chain is Anti-adapter protein IraD, found in Salmonella arizonae (strain ATCC BAA-731 / CDC346-86 / RSK2980).